Here is a 431-residue protein sequence, read N- to C-terminus: Cyclin-B2-4 (431 aa).

The tract at residues 1–30 (MGGSDENRHGVIGPMNRQQGGLRGGKVIPT) is disordered.

Belongs to the cyclin family. Cyclin AB subfamily. Interacts with SMR11.

This chain is Cyclin-B2-4 (CYCB2-4), found in Arabidopsis thaliana (Mouse-ear cress).